The sequence spans 237 residues: E3 ubiquitin-protein ligase RNF166 (237 aa).

Residues Cys33–Arg73 form an RING-type zinc finger. Positions 98, 101, 113, and 117 each coordinate Zn(2+). The C2HC RNF-type zinc-finger motif lies at Cys98–Cys117. The region spanning Asp221 to Asn237 is the UIM domain.

The protein resides in the cytoplasm. The catalysed reaction is S-ubiquitinyl-[E2 ubiquitin-conjugating enzyme]-L-cysteine + [acceptor protein]-L-lysine = [E2 ubiquitin-conjugating enzyme]-L-cysteine + N(6)-ubiquitinyl-[acceptor protein]-L-lysine.. It functions in the pathway protein modification; protein ubiquitination. In terms of biological role, E3 ubiquitin-protein ligase that promotes the ubiquitination of different substrates. In turn, participates in different biological processes including interferon production or autophagy. Plays a role in the activation of RNA virus-induced interferon-beta production by promoting the ubiquitination of TRAF3 and TRAF6. Also plays a role in the early recruitment of autophagy adapters to bacteria. Mediates 'Lys-29' and 'Lys-33'-linked ubiquitination of SQSTM1 leading to xenophagic targeting of bacteria and inhibition of their replication. The protein is E3 ubiquitin-protein ligase RNF166 (RNF166) of Homo sapiens (Human).